The chain runs to 204 residues: Elongation factor Ts (204 aa).

Residues 87 to 90 form an involved in Mg(2+) ion dislocation from EF-Tu region; that stretch reads TDFV.

Belongs to the EF-Ts family.

It is found in the cytoplasm. Associates with the EF-Tu.GDP complex and induces the exchange of GDP to GTP. It remains bound to the aminoacyl-tRNA.EF-Tu.GTP complex up to the GTP hydrolysis stage on the ribosome. The sequence is that of Elongation factor Ts from Frankia casuarinae (strain DSM 45818 / CECT 9043 / HFP020203 / CcI3).